Consider the following 592-residue polypeptide: Aspartate--tRNA(Asp/Asn) ligase (592 aa).

Glutamate 175 contacts L-aspartate. An aspartate region spans residues 199–202 (QLFK). Arginine 221 provides a ligand contact to L-aspartate. Residues 221 to 223 (RDE) and glutamine 230 contribute to the ATP site. Histidine 450 lines the L-aspartate pocket. Residue glutamate 483 coordinates ATP. Residue arginine 490 participates in L-aspartate binding. Residue 535 to 538 (GLDR) participates in ATP binding.

This sequence belongs to the class-II aminoacyl-tRNA synthetase family. Type 1 subfamily. In terms of assembly, homodimer.

The protein localises to the cytoplasm. The enzyme catalyses tRNA(Asx) + L-aspartate + ATP = L-aspartyl-tRNA(Asx) + AMP + diphosphate. Its function is as follows. Aspartyl-tRNA synthetase with relaxed tRNA specificity since it is able to aspartylate not only its cognate tRNA(Asp) but also tRNA(Asn). Reaction proceeds in two steps: L-aspartate is first activated by ATP to form Asp-AMP and then transferred to the acceptor end of tRNA(Asp/Asn). This Acinetobacter baumannii (strain ATCC 17978 / DSM 105126 / CIP 53.77 / LMG 1025 / NCDC KC755 / 5377) protein is Aspartate--tRNA(Asp/Asn) ligase.